The primary structure comprises 47 residues: Mu-theraphotoxin-An1a (47 aa).

Cystine bridges form between cysteine 4–cysteine 34, cysteine 8–cysteine 39, and cysteine 22–cysteine 44.

Contains 3 disulfide bonds. In terms of tissue distribution, expressed by the venom gland.

Its subcellular location is the secreted. Its function is as follows. Is toxic to insects. Reduces amplitude and frequency of spontaneous firing and inhibits voltage-gated sodium current (Nav) in the dorsal unpaired median (DUM) neurons of P.americana. The chain is Mu-theraphotoxin-An1a from Acanthoscurria natalensis (Tarantula spider).